The chain runs to 200 residues: Recombination protein RecR (200 aa).

Residues 57-72 (CRQCRTLTEDELCPQC) form a C4-type zinc finger. The Toprim domain maps to 80-175 (TLLCVVEGPM…ITSRIAHGVP (96 aa)).

This sequence belongs to the RecR family.

Functionally, may play a role in DNA repair. It seems to be involved in an RecBC-independent recombinational process of DNA repair. It may act with RecF and RecO. In Pseudomonas fluorescens (strain ATCC BAA-477 / NRRL B-23932 / Pf-5), this protein is Recombination protein RecR.